Here is a 91-residue protein sequence, read N- to C-terminus: Small ribosomal subunit protein bS16 (91 aa).

It belongs to the bacterial ribosomal protein bS16 family.

This chain is Small ribosomal subunit protein bS16, found in Enterococcus faecalis (strain ATCC 700802 / V583).